Consider the following 237-residue polypeptide: uncharacterized protein (237 aa).

Positions 1 to 25 (MRHIFQRLLPRRLWLAGLPCLALLG) form a signal peptide, tat-type signal. Residues 201 to 237 (IERQLSTRKPAGNFSPDTPHESEKPAPSTHEVTPDEP) are disordered.

Post-translationally, exported by the Tat system. The position of the signal peptide cleavage has not been experimentally proven. Can also be exported by the Sec system.

This is an uncharacterized protein from Escherichia coli (strain K12).